Reading from the N-terminus, the 429-residue chain is Citrate synthase (429 aa).

Active-site residues include His306 and Asp364.

It belongs to the citrate synthase family.

It carries out the reaction oxaloacetate + acetyl-CoA + H2O = citrate + CoA + H(+). Its pathway is carbohydrate metabolism; tricarboxylic acid cycle; isocitrate from oxaloacetate: step 1/2. This chain is Citrate synthase (gltA), found in Rhizobium meliloti (strain 1021) (Ensifer meliloti).